A 38-amino-acid chain; its full sequence is Large ribosomal subunit protein bL36 (38 aa).

It belongs to the bacterial ribosomal protein bL36 family.

The polypeptide is Large ribosomal subunit protein bL36 (Chloroflexus aurantiacus (strain ATCC 29366 / DSM 635 / J-10-fl)).